Reading from the N-terminus, the 400-residue chain is Argininosuccinate synthase (400 aa).

ATP contacts are provided by residues Ala-10–Ser-18 and Ala-38. Tyr-89 provides a ligand contact to L-citrulline. Gly-119 contributes to the ATP binding site. Positions 121, 125, and 126 each coordinate L-aspartate. Asn-125 contributes to the L-citrulline binding site. Positions 129, 177, 186, 262, and 274 each coordinate L-citrulline.

The protein belongs to the argininosuccinate synthase family. Type 1 subfamily. Homotetramer.

The protein localises to the cytoplasm. The enzyme catalyses L-citrulline + L-aspartate + ATP = 2-(N(omega)-L-arginino)succinate + AMP + diphosphate + H(+). The protein operates within amino-acid biosynthesis; L-arginine biosynthesis; L-arginine from L-ornithine and carbamoyl phosphate: step 2/3. This chain is Argininosuccinate synthase, found in Prochlorococcus marinus (strain NATL1A).